The following is a 79-amino-acid chain: DNA gyrase inhibitor YacG (79 aa).

Positions 7, 10, 26, and 30 each coordinate Zn(2+).

Belongs to the DNA gyrase inhibitor YacG family. As to quaternary structure, interacts with GyrB. Requires Zn(2+) as cofactor.

Its function is as follows. Inhibits all the catalytic activities of DNA gyrase by preventing its interaction with DNA. Acts by binding directly to the C-terminal domain of GyrB, which probably disrupts DNA binding by the gyrase. In Shewanella halifaxensis (strain HAW-EB4), this protein is DNA gyrase inhibitor YacG.